Consider the following 142-residue polypeptide: Transcriptional regulator MraZ (142 aa).

SpoVT-AbrB domains are found at residues 5–47 (EYNH…PMEE) and 76–119 (ANEI…SREK).

Belongs to the MraZ family. In terms of assembly, forms oligomers.

Its subcellular location is the cytoplasm. The protein localises to the nucleoid. This chain is Transcriptional regulator MraZ, found in Clostridium tetani (strain Massachusetts / E88).